A 43-amino-acid polypeptide reads, in one-letter code: U5-hexatoxin-Mr1a (43 aa).

4 disulfide bridges follow: Cys-1–Cys-16, Cys-8–Cys-21, Cys-15–Cys-36, and Cys-17–Cys-43.

This sequence belongs to the neurotoxin 35 family. Contains 4 disulfide bonds. Expressed by the venom gland.

Its subcellular location is the secreted. This toxin blocks the neuromuscular transmission, and also acts on muscle. It exerts an effect of first exciting and then inhibiting the contraction of muscle. This toxin is active only against mammals. This is U5-hexatoxin-Mr1a from Macrothele raveni (Funnel-web spider).